We begin with the raw amino-acid sequence, 424 residues long: Catabolic NAD-specific glutamate dehydrogenase RocG (424 aa).

Substrate contacts are provided by lysine 80 and lysine 104. Residue lysine 116 is the Proton donor of the active site. Positions 200 and 231 each coordinate NAD(+). Serine 358 contacts substrate.

This sequence belongs to the Glu/Leu/Phe/Val dehydrogenases family. In terms of assembly, homohexamer. Interacts with transcriptional regulator GltC.

It carries out the reaction L-glutamate + NAD(+) + H2O = 2-oxoglutarate + NH4(+) + NADH + H(+). Its function is as follows. Devoted to catabolic function of glutamate (and other amino acids of the glutamate family) utilization as sole nitrogen source. It is not involved in anabolic function of glutamate biosynthesis since B.subtilis possesses only one route of glutamate biosynthesis from ammonia, catalyzed by glutamate synthase. Wild-type cells are unable to utilize glutamate or glutamine as a sole carbon source; thus RocG does not function physiologically to synthesize glutamate, but it is involved in the utilization of arginine, and proline as carbon or nitrogen source. The catabolic RocG is essential for controlling gltAB expression via an inhibitory interactions with the transcriptional regulator GltC in response to the availability of sugars. This Bacillus subtilis (strain 168) protein is Catabolic NAD-specific glutamate dehydrogenase RocG.